The primary structure comprises 221 residues: UPF0758 protein YicR (221 aa).

The MPN domain maps to 99–221 (ALLSPEMTLE…YVSFAERGWI (123 aa)). Zn(2+)-binding residues include His170, His172, and Asp183. Residues 170 to 183 (HNHPSGCAEPSKAD) carry the JAMM motif motif.

It belongs to the UPF0758 family. YicR subfamily.

In Salmonella arizonae (strain ATCC BAA-731 / CDC346-86 / RSK2980), this protein is UPF0758 protein YicR.